Here is a 120-residue protein sequence, read N- to C-terminus: Ribosome-binding factor A (120 aa).

It belongs to the RbfA family. As to quaternary structure, monomer. Binds 30S ribosomal subunits, but not 50S ribosomal subunits or 70S ribosomes.

The protein localises to the cytoplasm. Its function is as follows. One of several proteins that assist in the late maturation steps of the functional core of the 30S ribosomal subunit. Associates with free 30S ribosomal subunits (but not with 30S subunits that are part of 70S ribosomes or polysomes). Required for efficient processing of 16S rRNA. May interact with the 5'-terminal helix region of 16S rRNA. In Clostridium botulinum (strain 657 / Type Ba4), this protein is Ribosome-binding factor A.